The sequence spans 39 residues: uncharacterized protein (39 aa).

A helical membrane pass occupies residues 18–38 (AIKVIALVVLITISAVVYLSV).

Its subcellular location is the membrane. This is an uncharacterized protein from Enterobacteriaceae (Bacteriophage Mu).